The primary structure comprises 213 residues: Thymidine kinase (213 aa).

ATP contacts are provided by residues 22-29 and 94-97; these read GSMFSGKT and DEAQ. Glu95 functions as the Proton acceptor in the catalytic mechanism. Zn(2+) contacts are provided by Cys151, Cys154, Cys183, and Cys186. The interval 185–213 is disordered; it reads RCFQPPRPTSTSSLKAPAPAATAPRPELP. The segment covering 193 to 213 has biased composition (low complexity); sequence TSTSSLKAPAPAATAPRPELP.

Belongs to the thymidine kinase family. In terms of assembly, homotetramer.

It is found in the cytoplasm. It carries out the reaction thymidine + ATP = dTMP + ADP + H(+). The polypeptide is Thymidine kinase (Rhodothermus sp. (strain ITI 518)).